The primary structure comprises 437 residues: Epsilon-sarcoglycan (437 aa).

Residues 1–317 (MQLPRWWELG…LKSRDYYTDF (317 aa)) lie on the Extracellular side of the membrane. The N-linked (GlcNAc...) asparagine glycan is linked to asparagine 200. A helical membrane pass occupies residues 318 to 338 (LITLAVPSAVALVLFLILAYI). Topologically, residues 339 to 437 (MCCRREGVEK…QQQTTGKWYP (99 aa)) are cytoplasmic.

The protein belongs to the sarcoglycan alpha/epsilon family. In terms of processing, N-glycosylated. Ubiquitinated, leading to its degradation by the proteasome. Ubiquitous.

The protein resides in the cell membrane. Its subcellular location is the sarcolemma. It localises to the cytoplasm. It is found in the cytoskeleton. The protein localises to the cell projection. The protein resides in the dendrite. Its subcellular location is the golgi apparatus. Component of the sarcoglycan complex, a subcomplex of the dystrophin-glycoprotein complex which forms a link between the F-actin cytoskeleton and the extracellular matrix. This Homo sapiens (Human) protein is Epsilon-sarcoglycan (SGCE).